The following is a 169-amino-acid chain: MKPSSSNSRSKGHAKARRKTREELDQEARDRKRQKKRRGHAPGSRAAGGNTTSGSKGQNAPKDPRIGSKTPIPLGVAEKVTKQHKPKSEKPMLSLQAELELLETDERLDALLERLEAGETLSAEEQSWVDVKLDRIDELMQKLGLSYDDDEEEEEDEKQEDMMRLLRGN.

Disordered regions lie at residues 1-92 and 146-169; these read MKPS…EKPM and SYDD…LRGN. Residues 10–19 are compositionally biased toward basic residues; it reads SKGHAKARRK. The span at 20–30 shows a compositional bias: basic and acidic residues; it reads TREELDQEARD. Residues 31–40 are compositionally biased toward basic residues; it reads RKRQKKRRGH. Residues 49–58 are compositionally biased toward polar residues; sequence GNTTSGSKGQ. Over residues 147–159 the composition is skewed to acidic residues; that stretch reads YDDDEEEEEDEKQ. A compositionally biased stretch (basic and acidic residues) spans 160-169; that stretch reads EDMMRLLRGN.

The protein belongs to the YihI family. As to quaternary structure, interacts with Der.

Functionally, a GTPase-activating protein (GAP) that modifies Der/EngA GTPase function. May play a role in ribosome biogenesis. This is Der GTPase-activating protein YihI from Escherichia coli O1:K1 / APEC.